The chain runs to 265 residues: 14-3-3-like protein GF14-D (265 aa).

The segment at 244 to 265 (DANDDGGDEIKEAAAPKEPGDQ) is disordered. Over residues 251–265 (DEIKEAAAPKEPGDQ) the composition is skewed to basic and acidic residues.

Belongs to the 14-3-3 family. In terms of assembly, interacts with BZR1. Interacts with ABI5.

Functionally, is associated with a DNA binding complex that binds to the G box, a well-characterized cis-acting DNA regulatory element found in plant genes. The sequence is that of 14-3-3-like protein GF14-D (GF14D) from Oryza sativa subsp. japonica (Rice).